The chain runs to 217 residues: Small ribosomal subunit protein uS2 (217 aa).

Belongs to the universal ribosomal protein uS2 family.

This is Small ribosomal subunit protein uS2 from Korarchaeum cryptofilum (strain OPF8).